The sequence spans 362 residues: RING-H2 finger protein ATL52 (362 aa).

Residues 58–78 (LIALIGILTSALILVSYYTLI) traverse the membrane as a helical segment. The RING-type; atypical zinc-finger motif lies at 142–184 (CSVCLSEFEENESLRLLPKCNHAFHLPCIDTWLKSHSNCPLCR). 2 disordered regions span residues 252–271 (DARS…DEDS) and 296–333 (EDEE…RSGG). A compositionally biased stretch (basic and acidic residues) spans 309 to 319 (QRREEGEDGDG).

Belongs to the RING-type zinc finger family. ATL subfamily. In terms of tissue distribution, expressed in flowers.

It localises to the membrane. The catalysed reaction is S-ubiquitinyl-[E2 ubiquitin-conjugating enzyme]-L-cysteine + [acceptor protein]-L-lysine = [E2 ubiquitin-conjugating enzyme]-L-cysteine + N(6)-ubiquitinyl-[acceptor protein]-L-lysine.. The protein operates within protein modification; protein ubiquitination. The protein is RING-H2 finger protein ATL52 (ATL52) of Arabidopsis thaliana (Mouse-ear cress).